A 353-amino-acid polypeptide reads, in one-letter code: THUMP domain-containing protein 1 (353 aa).

A compositionally biased stretch (polar residues) spans 1-10 (MAAPAQQTTQ). Disordered regions lie at residues 1 to 20 (MAAP…KGKA) and 73 to 96 (YGPE…DDAE). At Ala2 the chain carries N-acetylalanine. The residue at position 79 (Thr79) is a Phosphothreonine. Phosphoserine occurs at positions 86, 88, and 119. In terms of domain architecture, THUMP spans 147–254 (DMYKTKKKKT…KAVCCLSVVK (108 aa)). At Ser270 the chain carries Phosphoserine. A disordered region spans residues 270-353 (SPKDPSQLNS…GSKSNENDFS (84 aa)). The span at 273 to 282 (DPSQLNSKQG) shows a compositional bias: polar residues. A compositionally biased stretch (basic and acidic residues) spans 283–296 (NGKEAKLESADKSD). The segment covering 297 to 327 (QNNTAEGKNNQQVPENTEELGQTKPTSNPQV) has biased composition (polar residues).

It belongs to the THUMPD1 family. Interacts with NAT10. Binds tRNA.

In terms of biological role, functions as a tRNA-binding adapter to mediate NAT10-dependent tRNA acetylation modifying cytidine to N4-acetylcytidine (ac4C). In Homo sapiens (Human), this protein is THUMP domain-containing protein 1 (THUMPD1).